Consider the following 194-residue polypeptide: MSLVPIVVEQTNRGERSYDIYSRLLKDRIIVLSDEINDVTASLVVAQMLFLEAEDPDKDIQLYINSPGGSVTAGFAIYDTMQYVKPDVSTICIGMAASMGAFLLAAGAKGKRFALPNSEIMIHQPLGGARGQATDIKIHAEQIIKIKNKLNRILSERTGQPFEKIERDTERDFFMSAEEAKAYGIVDEVMERRK.

Ser-98 (nucleophile) is an active-site residue. His-123 is an active-site residue.

It belongs to the peptidase S14 family. As to quaternary structure, fourteen ClpP subunits assemble into 2 heptameric rings which stack back to back to give a disk-like structure with a central cavity, resembling the structure of eukaryotic proteasomes.

The protein localises to the cytoplasm. The enzyme catalyses Hydrolysis of proteins to small peptides in the presence of ATP and magnesium. alpha-casein is the usual test substrate. In the absence of ATP, only oligopeptides shorter than five residues are hydrolyzed (such as succinyl-Leu-Tyr-|-NHMec, and Leu-Tyr-Leu-|-Tyr-Trp, in which cleavage of the -Tyr-|-Leu- and -Tyr-|-Trp bonds also occurs).. Functionally, cleaves peptides in various proteins in a process that requires ATP hydrolysis. Has a chymotrypsin-like activity. Plays a major role in the degradation of misfolded proteins. This Acetivibrio thermocellus (strain ATCC 27405 / DSM 1237 / JCM 9322 / NBRC 103400 / NCIMB 10682 / NRRL B-4536 / VPI 7372) (Clostridium thermocellum) protein is ATP-dependent Clp protease proteolytic subunit.